The chain runs to 381 residues: Malonyl-CoA-acyl carrier protein transacylase, mitochondrial (381 aa).

Active-site residues include S151 and H268. K312 carries the N6-succinyllysine modification.

This sequence belongs to the type II malonyltransferase family. In terms of tissue distribution, expressed in retinal ganglion cells.

The protein localises to the mitochondrion. The catalysed reaction is holo-[ACP] + malonyl-CoA = malonyl-[ACP] + CoA. It functions in the pathway lipid metabolism; fatty acid biosynthesis. In terms of biological role, catalyzes the transfer of a malonyl moiety from malonyl-CoA to the free thiol group of the phosphopantetheine arm of the mitochondrial ACP protein (NDUFAB1). This suggests the existence of the biosynthesis of fatty acids in mitochondria. The polypeptide is Malonyl-CoA-acyl carrier protein transacylase, mitochondrial (Mus musculus (Mouse)).